An 89-amino-acid polypeptide reads, in one-letter code: Small ribosomal subunit protein uS15 (89 aa).

The protein belongs to the universal ribosomal protein uS15 family. Part of the 30S ribosomal subunit. Forms a bridge to the 50S subunit in the 70S ribosome, contacting the 23S rRNA.

Its function is as follows. One of the primary rRNA binding proteins, it binds directly to 16S rRNA where it helps nucleate assembly of the platform of the 30S subunit by binding and bridging several RNA helices of the 16S rRNA. In terms of biological role, forms an intersubunit bridge (bridge B4) with the 23S rRNA of the 50S subunit in the ribosome. This Buchnera aphidicola subsp. Baizongia pistaciae (strain Bp) protein is Small ribosomal subunit protein uS15.